A 545-amino-acid polypeptide reads, in one-letter code: Esterase-5B (545 aa).

The first 19 residues, 1–19, serve as a signal peptide directing secretion; sequence MYCEKLILLLGCFWISSSA. A disulfide bridge connects residues cysteine 84 and cysteine 103. Asparagine 113 is a glycosylation site (N-linked (GlcNAc...) asparagine). The active-site Acyl-ester intermediate is the serine 207. Cysteine 259 and cysteine 271 form a disulfide bridge. Asparagine 421 is a glycosylation site (N-linked (GlcNAc...) asparagine). Histidine 467 acts as the Charge relay system in catalysis. Asparagine 507 carries an N-linked (GlcNAc...) asparagine glycan. A disulfide bridge connects residues cysteine 515 and cysteine 536.

The protein belongs to the type-B carboxylesterase/lipase family. In terms of assembly, homodimer.

Its subcellular location is the secreted. The enzyme catalyses a carboxylic ester + H2O = an alcohol + a carboxylate + H(+). This is Esterase-5B (Est-5B) from Drosophila miranda (Fruit fly).